A 1228-amino-acid polypeptide reads, in one-letter code: Membrane-anchored lipid-binding protein LAM1 (1228 aa).

Residues 1–1062 (MHEHKAELRL…IFKCFSKVNK (1062 aa)) lie on the Cytoplasmic side of the membrane. The PH domain occupies 308-421 (EKGLSGWLYM…WINTLTSHKR (114 aa)). Positions 773-978 (EAWCYFQDNF…KTREYLKKFN (206 aa)) constitute a VASt domain. A helical membrane pass occupies residues 1063–1083 (TLYYCLLISAVTNLFFVGKSI). The Lumenal segment spans residues 1084-1228 (HSYFSVKSAE…EYNRLSAIPV (145 aa)). Asn-1205 is a glycosylation site (N-linked (GlcNAc...) asparagine).

Belongs to the SIP3 family.

The protein resides in the mitochondrion membrane. Its subcellular location is the endoplasmic reticulum membrane. Functionally, involved in mitochondrial fragmentation during programmed cell death in response to high levels of alpha-factor mating pheromone or the drug amiodarone. May be involved in sterol transfer between intracellular membranes. The sequence is that of Membrane-anchored lipid-binding protein LAM1 from Saccharomyces cerevisiae (strain ATCC 204508 / S288c) (Baker's yeast).